The following is a 402-amino-acid chain: Pyridinium-3,5-bisthiocarboxylic acid mononucleotide nickel insertion protein (402 aa).

This sequence belongs to the LarC family.

It carries out the reaction Ni(II)-pyridinium-3,5-bisthiocarboxylate mononucleotide = pyridinium-3,5-bisthiocarboxylate mononucleotide + Ni(2+). Its function is as follows. Involved in the biosynthesis of a nickel-pincer cofactor ((SCS)Ni(II) pincer complex). Binds Ni(2+), and functions in nickel delivery to pyridinium-3,5-bisthiocarboxylic acid mononucleotide (P2TMN), to form the mature cofactor. Is thus probably required for the activation of nickel-pincer cofactor-dependent enzymes. The protein is Pyridinium-3,5-bisthiocarboxylic acid mononucleotide nickel insertion protein of Desulfitobacterium hafniense (strain Y51).